The primary structure comprises 88 residues: Small ribosomal subunit protein uS15c (88 aa).

It belongs to the universal ribosomal protein uS15 family. Part of the 30S ribosomal subunit.

The protein localises to the plastid. It is found in the chloroplast. In Crucihimalaya wallichii (Rock-cress), this protein is Small ribosomal subunit protein uS15c (rps15).